Reading from the N-terminus, the 709-residue chain is Translation initiation factor IF-2 (709 aa).

Basic and acidic residues-rich tracts occupy residues 47 to 70 (DHQYRPNTGKKEEKKAEKKTEKPK) and 105 to 121 (KGKETKKTEAQQQEKKL). Residues 47 to 157 (DHQYRPNTGK…QPAKKEKELP (111 aa)) are disordered. Residues 125–137 (AKKKGKGPAKGKK) show a composition bias toward basic residues. The segment covering 138–149 (QAAPAAKQAPQP) has biased composition (low complexity). Residues 240–409 (ERPPVVTIMG…LLVSEMEELK (170 aa)) enclose the tr-type G domain. The segment at 249-256 (GHVDHGKT) is G1. 249–256 (GHVDHGKT) is a GTP binding site. Residues 274–278 (GITQH) are G2. The segment at 295–298 (DTPG) is G3. Residues 295-299 (DTPGH) and 349-352 (NKID) each bind GTP. The interval 349 to 352 (NKID) is G4. Residues 385-387 (SAK) are G5.

It belongs to the TRAFAC class translation factor GTPase superfamily. Classic translation factor GTPase family. IF-2 subfamily.

The protein localises to the cytoplasm. In terms of biological role, one of the essential components for the initiation of protein synthesis. Protects formylmethionyl-tRNA from spontaneous hydrolysis and promotes its binding to the 30S ribosomal subunits. Also involved in the hydrolysis of GTP during the formation of the 70S ribosomal complex. This chain is Translation initiation factor IF-2, found in Geobacillus kaustophilus (strain HTA426).